Here is a 318-residue protein sequence, read N- to C-terminus: Ribosomal RNA small subunit methyltransferase H (318 aa).

S-adenosyl-L-methionine-binding positions include 38-40 (AGH), Asp57, Leu91, Asp105, and Gln112.

It belongs to the methyltransferase superfamily. RsmH family.

Its subcellular location is the cytoplasm. It catalyses the reaction cytidine(1402) in 16S rRNA + S-adenosyl-L-methionine = N(4)-methylcytidine(1402) in 16S rRNA + S-adenosyl-L-homocysteine + H(+). Functionally, specifically methylates the N4 position of cytidine in position 1402 (C1402) of 16S rRNA. This Clavibacter sepedonicus (Clavibacter michiganensis subsp. sepedonicus) protein is Ribosomal RNA small subunit methyltransferase H.